The primary structure comprises 113 residues: Hydrogenase maturation factor HypA (113 aa).

A Ni(2+)-binding site is contributed by histidine 2. Residues cysteine 73, cysteine 76, cysteine 89, and cysteine 92 each contribute to the Zn(2+) site.

Belongs to the HypA/HybF family.

Its function is as follows. Involved in the maturation of [NiFe] hydrogenases. Required for nickel insertion into the metal center of the hydrogenase. The sequence is that of Hydrogenase maturation factor HypA from Bradyrhizobium sp. (strain ORS 278).